The primary structure comprises 580 residues: Jasmonoyl--L-amino acid synthetase JAR6 (580 aa).

Ser100 is an ATP binding site. Jasmonate is bound at residue Ser103. Residues Met120, Thr123, Gly164, Asn169, and 332-337 contribute to the ATP site; that span reads GSSEGW. 167 to 171 serves as a coordination point for an L-alpha-amino acid; sequence TTNVY. Jasmonate is bound at residue 329–332; the sequence is ADYG. 534 to 538 serves as a coordination point for an L-alpha-amino acid; sequence KILDH.

It belongs to the IAA-amido conjugating enzyme family.

The enzyme catalyses a jasmonate + an L-alpha-amino acid + ATP = a jasmonyl-L-amino acid + AMP + diphosphate + H(+). Catalyzes the synthesis of jasmonate-amino acid conjugates by adenylation. Catalyzes the conjugation of jasmonate (JA) to Ile, Leu and Val. Catalyzes the conjugation of JA to Ile that may mediate defense signaling and resistance to the herbivore Manduca sexta caterpillars. This is Jasmonoyl--L-amino acid synthetase JAR6 (JAR6) from Nicotiana attenuata (Coyote tobacco).